Reading from the N-terminus, the 267-residue chain is UPF0246 protein Dshi_3333 (267 aa).

It belongs to the UPF0246 family.

In Dinoroseobacter shibae (strain DSM 16493 / NCIMB 14021 / DFL 12), this protein is UPF0246 protein Dshi_3333.